The following is a 162-amino-acid chain: NADH-quinone oxidoreductase subunit I (162 aa).

2 4Fe-4S ferredoxin-type domains span residues 53-83 and 93-122; these read LRRYPNGEERCIACKLCEAVCPALAITIDSA and TRYDIDLFKCIFCGFCEESCPVDSIVETHI. Residues Cys-63, Cys-66, Cys-69, Cys-73, Cys-102, Cys-105, Cys-108, and Cys-112 each coordinate [4Fe-4S] cluster.

Belongs to the complex I 23 kDa subunit family. As to quaternary structure, NDH-1 is composed of 14 different subunits. Subunits NuoA, H, J, K, L, M, N constitute the membrane sector of the complex. [4Fe-4S] cluster serves as cofactor.

The protein localises to the cell inner membrane. It carries out the reaction a quinone + NADH + 5 H(+)(in) = a quinol + NAD(+) + 4 H(+)(out). Its function is as follows. NDH-1 shuttles electrons from NADH, via FMN and iron-sulfur (Fe-S) centers, to quinones in the respiratory chain. The immediate electron acceptor for the enzyme in this species is believed to be ubiquinone. Couples the redox reaction to proton translocation (for every two electrons transferred, four hydrogen ions are translocated across the cytoplasmic membrane), and thus conserves the redox energy in a proton gradient. The polypeptide is NADH-quinone oxidoreductase subunit I (Xanthomonas axonopodis pv. citri (strain 306)).